A 638-amino-acid polypeptide reads, in one-letter code: DEAD-box ATP-dependent RNA helicase 52B (638 aa).

Low complexity-rich tracts occupy residues Met-1–Ala-21 and Gly-40–Pro-67. The disordered stretch occupies residues Met-1–Pro-129. The span at Val-79–Ala-112 shows a compositional bias: gly residues. Residues Gly-119–Asp-128 show a composition bias toward basic and acidic residues. Positions Asn-169–Arg-197 match the Q motif motif. One can recognise a Helicase ATP-binding domain in the interval Ile-200–Leu-384. Ala-213–Thr-220 contacts ATP. The DEAD box motif lies at Asp-328–Asp-331. In terms of domain architecture, Helicase C-terminal spans Tyr-411 to Ala-562. Residues Ser-565 to Asp-638 are disordered. Over residues Phe-567 to Phe-583 the composition is skewed to gly residues. Over residues Gly-584 to Gly-593 the composition is skewed to basic and acidic residues. Residues Ser-594 to Gly-632 show a composition bias toward gly residues.

Belongs to the DEAD box helicase family. DDX3/DED1 subfamily.

It carries out the reaction ATP + H2O = ADP + phosphate + H(+). This Oryza sativa subsp. japonica (Rice) protein is DEAD-box ATP-dependent RNA helicase 52B (PL10B).